The following is a 358-amino-acid chain: tRNA-specific 2-thiouridylase MnmA (358 aa).

Residues 7 to 14 (AMSGGVDS) and Leu-33 contribute to the ATP site. The Nucleophile role is filled by Cys-101. Cys-101 and Cys-197 form a disulfide bridge. Gly-125 is a binding site for ATP. The segment at 147-149 (KDQ) is interaction with tRNA. Residue Cys-197 is the Cysteine persulfide intermediate of the active site.

Belongs to the MnmA/TRMU family.

The protein localises to the cytoplasm. It carries out the reaction S-sulfanyl-L-cysteinyl-[protein] + uridine(34) in tRNA + AH2 + ATP = 2-thiouridine(34) in tRNA + L-cysteinyl-[protein] + A + AMP + diphosphate + H(+). In terms of biological role, catalyzes the 2-thiolation of uridine at the wobble position (U34) of tRNA, leading to the formation of s(2)U34. The protein is tRNA-specific 2-thiouridylase MnmA of Rickettsia prowazekii (strain Madrid E).